The chain runs to 295 residues: Cutinase 11 (295 aa).

An N-terminal signal peptide occupies residues 1-17; that stretch reads MQTSALLLAAQALVASA. The cysteines at positions 25 and 102 are disulfide-linked. Catalysis depends on residues serine 113, aspartate 198, and histidine 210. Cysteine 184 and cysteine 202 are oxidised to a cystine. The tract at residues 228-258 is disordered; that stretch reads KLNSGGSPPTTPPTTPPTTPPTTPPTTPPPS. The span at 236–258 shows a compositional bias: pro residues; that stretch reads PTTPPTTPPTTPPTTPPTTPPPS. The CBM1 domain maps to 260–295; the sequence is SCAALYGQCGGQGWNGATCCSQGTCRASNQWYSQCL.

Belongs to the cutinase family. In terms of processing, the 2 disulfide bonds play a critical role in holding the catalytic residues in juxta-position; reduction of the disulfide bridges results in the complete inactivation of the enzyme.

It is found in the secreted. It carries out the reaction cutin + H2O = cutin monomers.. Functionally, catalyzes the hydrolysis of complex carboxylic polyesters found in the cell wall of plants. May degrade cutin, a macromolecule that forms the structure of the plant cuticle. May also degrade suberin, a specialized macromolecule found in the cell wall of various plant tissues. Allows pathogenic fungi to penetrate through the cuticular barrier into the host plant during the initial stage of fungal infection. Involved in pathogenesis. The sequence is that of Cutinase 11 from Verticillium dahliae (Verticillium wilt).